The sequence spans 716 residues: MTSPSPSGNVVVVGTDGTSSVSDRWPPQKTWISPPRVPIDRHFVTAAVPHVLMFLLVCIVFTAQQTRISTLEKRIDQLVVQIDQLPSSDSNTDDDDVAKSRRVRNSCMCPAGPPGERGPVGPPGLRGSPGWPGLPGLPAPYYRRPRVPLSNNLDESISRKMRAFGMLYSPDGQAIQLRGMPGPPGPAGPKGLRGYPGFPGPIGLDGPRGLPGTPGSKGDRGERGPLGPPGFPGPKGDRGVMTGPYVGPHAGPGPMSHHTNMGNVLPGPPGPPGPPGPAGRDGRHGLKGDRGLPGFDGESKIGPKGETGSPGRDGIPGARGPPGERGEKGDTAFLSTYPRVASSSTASSPGPPGPPGPPGVCHASQCTGIQGPPGEPGRTIIGPQGPPGEKGERGERGEPGDRGLPGAAGAANLLNGGKALVGPPGPPGRDGRPGDKGEKGEQGLRGDMGLPGPEGTPGKRGRRGRHGISLVAPNGTINEDLKKLLKTELMPLLIEDISELRGKNVIPGPPGPPGPRGHHGPVGPSGERGPQGLPGHSGERGDRGDIGPPGLPGQPGAGEISGSQSGPRGPPGLPGPPGEKGDLGPPGLPGQPGSLGLPGPPGPMGLRGPHGTEGETGKQGPEGSKGYPGPMGPQGPPGNDGEPGIDGRPGPAGEKGDQGIPGLDAPCPTGPDGLPLPYCSWKPMDGKNDVWERRKRASLPGAQPGKGAETRPPVTD.

Disordered regions lie at residues Leu-85–Pro-122 and Pro-183–Ala-472. 3 triple-helical region regions span residues Gly-179 to Arg-238, Leu-265 to Glu-298, and Gly-302 to Asp-330. Pro residues predominate over residues Pro-266–Pro-277. Residues Arg-280–Arg-290 are compositionally biased toward basic and acidic residues. A compositionally biased stretch (pro residues) spans Pro-349–Pro-358. Triple-helical region regions lie at residues Gly-385–Ala-411 and Gly-422–Gly-467. Positions Glu-389–Asp-401 are enriched in basic and acidic residues. Low complexity predominate over residues Arg-402–Gly-422. Residues Arg-429–Leu-444 show a composition bias toward basic and acidic residues. The N-linked (GlcNAc...) asparagine glycan is linked to Asn-474. The tract at residues Lys-503–Asp-716 is disordered. 3 triple-helical region regions span residues Pro-507 to Ala-557, Gly-566 to Pro-603, and Gly-605 to Asp-664. The span at Arg-568–Pro-577 shows a compositional bias: pro residues.

It belongs to the cuticular collagen family. As to quaternary structure, collagen polypeptide chains are complexed within the cuticle by disulfide bonds and other types of covalent cross-links.

Its function is as follows. Nematode cuticles are composed largely of collagen-like proteins. The cuticle functions both as an exoskeleton and as a barrier to protect the worm from its environment. In Caenorhabditis elegans, this protein is Putative cuticle collagen 99 (col-99).